The chain runs to 125 residues: Small ribosomal subunit protein uS11 (125 aa).

Belongs to the universal ribosomal protein uS11 family. As to quaternary structure, part of the 30S ribosomal subunit. Interacts with proteins S7 and S18. Binds to IF-3.

Its function is as follows. Located on the platform of the 30S subunit, it bridges several disparate RNA helices of the 16S rRNA. Forms part of the Shine-Dalgarno cleft in the 70S ribosome. The protein is Small ribosomal subunit protein uS11 of Aquifex aeolicus (strain VF5).